Consider the following 1005-residue polypeptide: Ephrin type-A receptor 8 (1005 aa).

Residues 1-27 (MAPARGRLPPALWVVTAAAAAATCVSA) form the signal peptide. Over 28 to 542 (ARGEVNLLDT…KPRPRYDTRT (515 aa)) the chain is Extracellular. Positions 31–209 (EVNLLDTSTI…YYKKCPAMVR (179 aa)) constitute an Eph LBD domain. Fibronectin type-III domains are found at residues 328–438 (PPSA…TNQA) and 439–534 (APSQ…TGKP). Residues Asn-340, Asn-407, and Asn-432 are each glycosylated (N-linked (GlcNAc...) asparagine). The helical transmembrane segment at 543–563 (IVWICLTLITGLVVLLLLLIC) threads the bilayer. The segment at 564-570 (KKRHCGY) is mediates interaction with ANKS1A and ANKS1B. Over 564 to 1005 (KKRHCGYSKA…TSTQGPRRHL (442 aa)) the chain is Cytoplasmic. Residues 589-644 (APPPVFLPLHHPPGKLPEPQFYAEPHTYEEPGRAGRSFTREIEASRIHIEKIIGSG) are mediates interaction with PIK3CG and required for endocytosis. Tyr-616 is modified (phosphotyrosine; by autocatalysis). The Protein kinase domain occupies 635–896 (IHIEKIIGSG…QIVSVLDALI (262 aa)). Residues 641 to 649 (IGSGDSGEV) and Lys-667 contribute to the ATP site. Asp-760 serves as the catalytic Proton acceptor. Tyr-839 carries the post-translational modification Phosphotyrosine; by autocatalysis. The SAM domain occupies 930-994 (GGGLTVGDWL…LGSIQTMRAQ (65 aa)). The short motif at 1003 to 1005 (RHL) is the PDZ-binding element.

Belongs to the protein kinase superfamily. Tyr protein kinase family. Ephrin receptor subfamily. In terms of assembly, heterotetramer upon binding of the ligand. The heterotetramer is composed of an ephrin dimer and a receptor dimer. Oligomerization is probably required to induce biological responses. May also form heterodimers with other ephrin receptors. Interacts with FYN; possible downstream effector of EPHA8 in regulation of cell adhesion. Interacts with PIK3CG; regulates integrin-mediated cell adhesion to substrate. Interacts with TIAM1; regulates clathrin-mediated endocytosis of EPHA8. Interacts with ANKS1A and ANKS1B; EPHA8 kinase activity-independent but stimulated by EPHA8 ubiquitination. Post-translationally, phosphorylated. Phosphorylation is stimulated upon binding of its ligands including EFNA2, EFNA3 and EFNA5. Autophosphorylation on Tyr-616 is critical for association with FYN. Autophosphorylation on Tyr-839 modulates tyrosine kinase activity. Ubiquitinated. Ubiquitination by CBL regulates the receptor stability and activity through proteasomal degradation. ANKS1A prevents ubiquitination and degradation.

Its subcellular location is the cell membrane. It is found in the cell projection. The protein resides in the early endosome membrane. The catalysed reaction is L-tyrosyl-[protein] + ATP = O-phospho-L-tyrosyl-[protein] + ADP + H(+). Its function is as follows. Receptor tyrosine kinase which binds promiscuously GPI-anchored ephrin-A family ligands residing on adjacent cells, leading to contact-dependent bidirectional signaling into neighboring cells. The signaling pathway downstream of the receptor is referred to as forward signaling while the signaling pathway downstream of the ephrin ligand is referred to as reverse signaling. The GPI-anchored ephrin-A EFNA2, EFNA3, and EFNA5 are able to activate EPHA8 through phosphorylation. With EFNA5 may regulate integrin-mediated cell adhesion and migration on fibronectin substrate but also neurite outgrowth. During development of the nervous system also plays a role in axon guidance. Downstream effectors of the EPHA8 signaling pathway include FYN which promotes cell adhesion upon activation by EPHA8 and the MAP kinases in the stimulation of neurite outgrowth. The sequence is that of Ephrin type-A receptor 8 (EPHA8) from Homo sapiens (Human).